Here is an 87-residue protein sequence, read N- to C-terminus: MKTNLKELLEFPTSFTYKVMGLAQPELVDQVVEVVQRHAPGDYSPEVKPSSKGNYHSVSITINATHIEQVETLYEELGNIEIVRMVL.

It belongs to the UPF0250 family.

The protein is UPF0250 protein ETA_23570 of Erwinia tasmaniensis (strain DSM 17950 / CFBP 7177 / CIP 109463 / NCPPB 4357 / Et1/99).